Here is a 719-residue protein sequence, read N- to C-terminus: Aminodeoxychorismate synthase (719 aa).

One can recognise a Glutamine amidotransferase type-1 domain in the interval Arg-5–His-199. Cys-86 serves as the catalytic Nucleophile. Residues His-173 and Glu-175 contribute to the active site. The disordered stretch occupies residues His-199–Ala-224. Over residues Ala-209–Ala-224 the composition is skewed to pro residues.

This sequence in the C-terminal section; belongs to the anthranilate synthase component I family.

It catalyses the reaction chorismate + L-glutamine = 4-amino-4-deoxychorismate + L-glutamate. The protein operates within antibiotic biosynthesis. Functionally, involved in pristinamycin I biosynthesis. Catalyzes the biosynthesis of 4-amino-4-deoxychorismate (ADC) from chorismate and glutamine. The chain is Aminodeoxychorismate synthase from Streptomyces pristinaespiralis.